The following is a 260-amino-acid chain: Nuclear shuttle protein (260 aa).

Positions 1-29 (MRRGAYTPRSTPFPRDRRSYNAGKGRSFR) are disordered. The Bipartite nuclear localization signal motif lies at 21-42 (NAGKGRSFRSYRRRGPVRPLAR). The short motif at 84 to 100 (VKTRALSDNRVGDYIKL) is the Nuclear localization signal element. An interaction with Arabidopsis thaliana NSI protein region spans residues 154–191 (QLFGSINASYADLSIQDPYKDRFTVIRQVSYPVNTEKG).

The protein belongs to the begomovirus nuclear shuttle protein family. Binds to single-stranded and double-stranded viral DNA. Interacts with the host nuclear shuttle interacting (NSI) protein. This interaction may allow NSP to recruit NSI monomers to the viral genome and thus regulate nuclear export of viral genome by NSP.

Its subcellular location is the host nucleus. The protein localises to the host cytoplasm. The protein resides in the host cell membrane. In terms of biological role, binds to the genomic viral ssDNA, shuttles it into and out of the cell nucleus. Begomoviruses use 2 proteins to transport their DNA from cell to cell. The nuclear shuttle protein (NSP) shuttles it between nucleus and cytoplasm and the movement protein (MP) probably transports the DNA-NSP complex to the cell periphery and facilitates movement across the cell wall. In Indian cassava mosaic virus (ICMV), this protein is Nuclear shuttle protein.